We begin with the raw amino-acid sequence, 1028 residues long: Pro-apoptotic serine protease nma111 (1028 aa).

The disordered stretch occupies residues 1 to 46; the sequence is MDLNGETSTKRKRSSVAAPAERPAKHLKPESSTLTPGDATPANGTV. The tract at residues 82-266 is serine protease; the sequence is VVSIHFCQTC…AATDYFLPLD (185 aa). Catalysis depends on charge relay system residues His-120, Asp-151, and Ser-233. 2 PDZ domains span residues 305–377 and 876–957; these read PEWE…QRGG and VFCG…VTFD. Positions 989–1028 are disordered; that stretch reads TVSHDRDRHKDGITPDAANLNPDAMDEVYEEVSDVEPEVD. A compositionally biased stretch (basic and acidic residues) spans 990 to 1001; the sequence is VSHDRDRHKDGI. The span at 1012 to 1028 shows a compositional bias: acidic residues; the sequence is AMDEVYEEVSDVEPEVD.

This sequence belongs to the peptidase S1C family.

It is found in the nucleus. Its function is as follows. Nuclear serine protease which mediates apoptosis. In Neosartorya fischeri (strain ATCC 1020 / DSM 3700 / CBS 544.65 / FGSC A1164 / JCM 1740 / NRRL 181 / WB 181) (Aspergillus fischerianus), this protein is Pro-apoptotic serine protease nma111 (nma111).